Here is a 293-residue protein sequence, read N- to C-terminus: Bifunctional protein FolD (293 aa).

NADP(+)-binding positions include 165-167, Ser190, and Ile231; that span reads GRS.

It belongs to the tetrahydrofolate dehydrogenase/cyclohydrolase family. As to quaternary structure, homodimer.

It catalyses the reaction (6R)-5,10-methylene-5,6,7,8-tetrahydrofolate + NADP(+) = (6R)-5,10-methenyltetrahydrofolate + NADPH. The catalysed reaction is (6R)-5,10-methenyltetrahydrofolate + H2O = (6R)-10-formyltetrahydrofolate + H(+). Its pathway is one-carbon metabolism; tetrahydrofolate interconversion. Its function is as follows. Catalyzes the oxidation of 5,10-methylenetetrahydrofolate to 5,10-methenyltetrahydrofolate and then the hydrolysis of 5,10-methenyltetrahydrofolate to 10-formyltetrahydrofolate. This is Bifunctional protein FolD from Parasynechococcus marenigrum (strain WH8102).